Here is a 329-residue protein sequence, read N- to C-terminus: Taste receptor type 2 member 134 (329 aa).

Residues M1–K27 are Extracellular-facing. A helical transmembrane segment spans residues M28–Q48. The Cytoplasmic portion of the chain corresponds to N49 to A68. The helical transmembrane segment at G69 to V89 threads the bilayer. The Extracellular portion of the chain corresponds to N90–T121. A helical membrane pass occupies residues W122 to I142. The Cytoplasmic segment spans residues K143–L153. A helical transmembrane segment spans residues L154–I174. Topologically, residues A175–H201 are extracellular. N183 carries N-linked (GlcNAc...) asparagine glycosylation. A helical membrane pass occupies residues A202–F222. Topologically, residues S223–K251 are cytoplasmic. Residues S252–T272 form a helical membrane-spanning segment. At R273–H282 the chain is on the extracellular side. Residues W283–S303 traverse the membrane as a helical segment. The Cytoplasmic portion of the chain corresponds to N304–G329.

This sequence belongs to the G-protein coupled receptor T2R family. As to expression, expressed in tongue and gastrointestinal tract.

The protein resides in the membrane. Putative taste receptor which may play a role in the perception of bitterness. The polypeptide is Taste receptor type 2 member 134 (Rattus norvegicus (Rat)).